The sequence spans 400 residues: Integumentary mucin A.1 (400 aa).

A signal peptide spans 1–20 (MKHIILCIHFLLMVVGLGQA). P-type domains follow at residues 21-64 (QDCS…FYNA) and 72-115 (LECS…YART). Intrachain disulfides connect C23-C49, C33-C48, and C43-C60. A glycan (N-linked (GlcNAc...) asparagine) is linked at N63. 3 cysteine pairs are disulfide-bonded: C74-C100, C84-C99, and C94-C111. Composition is skewed to low complexity over residues 122–264 (PDTT…DTTP) and 272–299 (ETTT…ETTT). The disordered stretch occupies residues 122–302 (PDTTTASTTA…TTTETTTAPP (181 aa)). Repeat copies occupy residues 127 to 135 (ASTTAETTT), 136 to 144 (VPTTPETTT), 145 to 153 (VPTTPETTT), 154 to 162 (VPTTPETTT), 163 to 171 (VPTTPETTT), 172 to 180 (VPTTPETTT), 181 to 189 (VPTTPETTT), 190 to 198 (VPTTPETTT), 199 to 207 (VPTTPETTT), 208 to 216 (VPTTPETTT), 217 to 225 (VPTTPETTT), 226 to 234 (VPTTPETTT), 235 to 243 (ASTTAETTT), and 244 to 252 (VPTTPETTT). The interval 127-261 (ASTTAETTTV…TEPTTTPTTD (135 aa)) is 15 X 9 AA approximate tandem repeats of [AV]-[SP]-T-T-[AP]-E-T-T-T. A 1-15; approximate repeat occupies 253 to 261 (EPTTTPTTD). 7 consecutive repeat copies span residues 272–275 (ETTT), 276–279 (ETTT), 280–283 (ETTT), 284–287 (ETTT), 288–291 (ETTT), 292–295 (ETTT), and 296–299 (ETTT). The segment at 272–299 (ETTTETTTETTTETTTETTTETTTETTT) is 7 X 4 AA repeats of E-T-T-T. P-type domains follow at residues 298 to 343 (TTAP…FYTE) and 351 to 394 (AECT…FEKA). 5 cysteine pairs are disulfide-bonded: C312/C327, C322/C339, C353/C379, C363/C378, and C373/C390.

Post-translationally, extensively O-glycosylated. Consist of about 70% carbohydrate and 30% protein. In terms of tissue distribution, expressed and stored exclusively in mature mucous glands of the skin.

It is found in the secreted. In terms of biological role, could be involved in defense against microbial infections. Protects the epithelia from external environment. The sequence is that of Integumentary mucin A.1 from Xenopus laevis (African clawed frog).